We begin with the raw amino-acid sequence, 185 residues long: Peptidyl-tRNA hydrolase (185 aa).

Residue Y14 coordinates tRNA. H19 functions as the Proton acceptor in the catalytic mechanism. Y64, N66, and N112 together coordinate tRNA.

Belongs to the PTH family. Monomer.

The protein localises to the cytoplasm. The enzyme catalyses an N-acyl-L-alpha-aminoacyl-tRNA + H2O = an N-acyl-L-amino acid + a tRNA + H(+). Hydrolyzes ribosome-free peptidyl-tRNAs (with 1 or more amino acids incorporated), which drop off the ribosome during protein synthesis, or as a result of ribosome stalling. Its function is as follows. Catalyzes the release of premature peptidyl moieties from peptidyl-tRNA molecules trapped in stalled 50S ribosomal subunits, and thus maintains levels of free tRNAs and 50S ribosomes. This is Peptidyl-tRNA hydrolase from Lactiplantibacillus plantarum (strain ATCC BAA-793 / NCIMB 8826 / WCFS1) (Lactobacillus plantarum).